Here is a 55-residue protein sequence, read N- to C-terminus: Large ribosomal subunit protein bL33 (55 aa).

This sequence belongs to the bacterial ribosomal protein bL33 family.

The chain is Large ribosomal subunit protein bL33 from Erythrobacter litoralis (strain HTCC2594).